The following is a 206-amino-acid chain: Thymidylate kinase (206 aa).

11 to 18 (GIDGAGKT) contributes to the ATP binding site.

It belongs to the thymidylate kinase family.

It carries out the reaction dTMP + ATP = dTDP + ADP. Its function is as follows. Phosphorylation of dTMP to form dTDP in both de novo and salvage pathways of dTTP synthesis. In Burkholderia cenocepacia (strain HI2424), this protein is Thymidylate kinase.